The primary structure comprises 309 residues: D-alanine--D-alanine ligase (309 aa).

Residues 109-304 enclose the ATP-grasp domain; sequence KMVWAACGLP…FTALCLAILE (196 aa). 135-190 serves as a coordination point for ATP; the sequence is VAELGLPIFVKPVHEGSSMGATKVTAASQLKAAWERAARFDDLVLAEEFIVGAELT. The Mg(2+) site is built by D258, E271, and N273.

This sequence belongs to the D-alanine--D-alanine ligase family. Requires Mg(2+) as cofactor. It depends on Mn(2+) as a cofactor.

It is found in the cytoplasm. It catalyses the reaction 2 D-alanine + ATP = D-alanyl-D-alanine + ADP + phosphate + H(+). Its pathway is cell wall biogenesis; peptidoglycan biosynthesis. Cell wall formation. This Aromatoleum aromaticum (strain DSM 19018 / LMG 30748 / EbN1) (Azoarcus sp. (strain EbN1)) protein is D-alanine--D-alanine ligase.